The primary structure comprises 299 residues: Delta-9 desaturase-like 5 protein (299 aa).

Transmembrane regions (helical) follow at residues 31–51 and 55–75; these read ADII…LAPF and WEAL…ITFS. Residues 77–82 carry the Histidine box-1 motif; sequence HRNLAH. A Histidine box-2 motif is present at residues 114-118; the sequence is HRFHH. Helical transmembrane passes span 174–194 and 199–219; these read IGFH…LPYL and GVGG…CHIW. The short motif at 246–250 is the Histidine box-3 element; it reads HNNHH.

Belongs to the fatty acid desaturase type 1 family. Fe cation is required as a cofactor.

It localises to the endoplasmic reticulum membrane. It functions in the pathway lipid metabolism; polyunsaturated fatty acid biosynthesis. The chain is Delta-9 desaturase-like 5 protein from Arabidopsis thaliana (Mouse-ear cress).